The sequence spans 319 residues: Acetyl-coenzyme A carboxylase carboxyl transferase subunit alpha (319 aa).

The region spanning 43-296 (LKQKSVELTQ…KTQLLLDLVE (254 aa)) is the CoA carboxyltransferase C-terminal domain.

Belongs to the AccA family. Acetyl-CoA carboxylase is a heterohexamer composed of biotin carboxyl carrier protein (AccB), biotin carboxylase (AccC) and two subunits each of ACCase subunit alpha (AccA) and ACCase subunit beta (AccD).

The protein resides in the cytoplasm. It carries out the reaction N(6)-carboxybiotinyl-L-lysyl-[protein] + acetyl-CoA = N(6)-biotinyl-L-lysyl-[protein] + malonyl-CoA. The protein operates within lipid metabolism; malonyl-CoA biosynthesis; malonyl-CoA from acetyl-CoA: step 1/1. Its function is as follows. Component of the acetyl coenzyme A carboxylase (ACC) complex. First, biotin carboxylase catalyzes the carboxylation of biotin on its carrier protein (BCCP) and then the CO(2) group is transferred by the carboxyltransferase to acetyl-CoA to form malonyl-CoA. The polypeptide is Acetyl-coenzyme A carboxylase carboxyl transferase subunit alpha (Blochmanniella floridana).